The primary structure comprises 416 residues: Serine hydroxymethyltransferase (416 aa).

(6S)-5,6,7,8-tetrahydrofolate is bound by residues L121 and 125–127 (GHL). K229 carries the post-translational modification N6-(pyridoxal phosphate)lysine.

This sequence belongs to the SHMT family. As to quaternary structure, homodimer. Pyridoxal 5'-phosphate serves as cofactor.

The protein localises to the cytoplasm. The catalysed reaction is (6R)-5,10-methylene-5,6,7,8-tetrahydrofolate + glycine + H2O = (6S)-5,6,7,8-tetrahydrofolate + L-serine. It functions in the pathway one-carbon metabolism; tetrahydrofolate interconversion. The protein operates within amino-acid biosynthesis; glycine biosynthesis; glycine from L-serine: step 1/1. Catalyzes the reversible interconversion of serine and glycine with tetrahydrofolate (THF) serving as the one-carbon carrier. This reaction serves as the major source of one-carbon groups required for the biosynthesis of purines, thymidylate, methionine, and other important biomolecules. Also exhibits THF-independent aldolase activity toward beta-hydroxyamino acids, producing glycine and aldehydes, via a retro-aldol mechanism. The protein is Serine hydroxymethyltransferase of Neisseria meningitidis serogroup C (strain 053442).